The primary structure comprises 468 residues: 5-carboxymethyl-2-hydroxymuconate semialdehyde dehydrogenase (468 aa).

Residue Glu244 is part of the active site. The Nucleophile role is filled by Cys278.

It belongs to the aldehyde dehydrogenase family. In terms of assembly, homodimer.

It carries out the reaction 2-hydroxy-5-carboxymethylmuconate semialdehyde + NAD(+) + H2O = (2E,4Z)-5-hydroxypenta-2,4-diene-1,2,5-tricarboxylate + NADH + 2 H(+). It participates in aromatic compound metabolism; 4-hydroxyphenylacetate degradation; pyruvate and succinate semialdehyde from 4-hydroxyphenylacetate: step 3/7. In terms of biological role, catalyzes the conversion of 5-carboxymethyl-2-hydroxy-muconic semialdehyde (CHMS) into 5-carboxymethyl-2-hydroxy-muconic acid (CHM or (2E,4Z)-5-hydroxypenta-2,4-diene-1,2,5-tricarboxylate). Is involved in a meta-cleavage pathway for the catabolism of 4-hydroxyphenylacetate (4-HPA) via homoprotocatechuate (HPC or 3,4-dihydroxyphenylacetate). The polypeptide is 5-carboxymethyl-2-hydroxymuconate semialdehyde dehydrogenase (Escherichia coli).